Reading from the N-terminus, the 264-residue chain is Small ribosomal subunit protein eS1 (264 aa).

Residues 233-264 form a disordered region; the sequence is GEGGGAGKPAGDETGAKVERADGYEPPVQESV. Positions 242–255 are enriched in basic and acidic residues; the sequence is AGDETGAKVERADG.

Belongs to the eukaryotic ribosomal protein eS1 family. In terms of assembly, component of the small ribosomal subunit. Mature ribosomes consist of a small (40S) and a large (60S) subunit. The 40S subunit contains about 33 different proteins and 1 molecule of RNA (18S). The 60S subunit contains about 49 different proteins and 3 molecules of RNA (28S, 5.8S and 5S). Part of the small subunit (SSU) processome, composed of more than 70 proteins and the RNA chaperone small nucleolar RNA (snoRNA) U3.

It localises to the cytoplasm. Its subcellular location is the nucleus. It is found in the nucleolus. Its function is as follows. Component of the small ribosomal subunit. The ribosome is a large ribonucleoprotein complex responsible for the synthesis of proteins in the cell. Part of the small subunit (SSU) processome, first precursor of the small eukaryotic ribosomal subunit. During the assembly of the SSU processome in the nucleolus, many ribosome biogenesis factors, an RNA chaperone and ribosomal proteins associate with the nascent pre-rRNA and work in concert to generate RNA folding, modifications, rearrangements and cleavage as well as targeted degradation of pre-ribosomal RNA by the RNA exosome. May play a role during erythropoiesis. The chain is Small ribosomal subunit protein eS1 (rps3a) from Xenopus tropicalis (Western clawed frog).